Reading from the N-terminus, the 814-residue chain is Origin of replication complex subunit 1 (814 aa).

Positions 1-15 (MDLSATPSRSKSGLR) are enriched in polar residues. A disordered region spans residues 1-127 (MDLSATPSRS…PKKPKKRAYY (127 aa)). 2 stretches are compositionally biased toward low complexity: residues 51–62 (APMSPVTPSSVR) and 69–80 (ETPTKVTSETPV). The Nuclear localization signal motif lies at 105-112 (PKRQRQRQ). Residues 108–127 (QRQRQRQRQQPKKPKKRAYY) are compositionally biased toward basic residues. A histone H3 binding region spans residues 157 to 181 (DPEAEECRVCFRAGAAVMVECDVCL). The segment at 160 to 209 (AEECRVCFRAGAAVMVECDVCLGGFHLRCVRPPLRRVPEGDWACPYCEAE) adopts a PHD-type zinc-finger fold. Zn(2+) contacts are provided by Cys163, Cys166, Cys177, Cys180, His185, and Cys188. The segment at 197 to 201 (PEGDW) is histone H3 binding. The Zn(2+) site is built by Cys203 and Cys206. A BAH domain is found at 218–335 (PKPPEGKRIV…IHWHNFKRLA (118 aa)). Positions 310–315 (ASDQGD) are histone H3 binding. 2 stretches are compositionally biased toward acidic residues: residues 339 to 349 (DEPETKEDPGD) and 360 to 373 (SDSDEDSEYDEEEE). The tract at residues 339–384 (DEPETKEDPGDEPYNAGNDYVSDSDEDSEYDEEEEPTKCSSARTHQ) is disordered. Residues 433-804 (PKSLPCRDKE…DDVTFALKES (372 aa)) form a necessary and sufficient for ORC complex assembly region. ATP-binding positions include 468–475 (GVPGTGKT) and 468–476 (GVPGTGKTM). Mg(2+) contacts are provided by Asp558 and Glu559. Glu559, Asn592, and Arg657 together coordinate ATP.

This sequence belongs to the ORC1 family. As to quaternary structure, component of the origin recognition complex (ORC) composed of at least ORC1, ORC2, ORC3, ORC4, ORC5 and ORC6. ORC is regulated in a cell-cycle and development dependent manner. It is sequentially assembled at the exit from anaphase of mitosis and disassembled as cells enter S phase. Binds unmodified and methylated histone H3. As to expression, expressed strongly in root tips and shoot apical meristem (SAM), and weakly in young leaves. Not detected in mature leaves.

The protein resides in the nucleus. In terms of biological role, essential protein. Component of the origin recognition complex (ORC) that binds origins of replication. It has a role in both chromosomal replication and mating type transcriptional silencing. Binds to the ARS consensus sequence (ACS) of origins of replication. H3K4me3 effector that positively regulates the transcription of a subset of genes. Required for cell proliferation. This chain is Origin of replication complex subunit 1, found in Oryza sativa subsp. japonica (Rice).